Consider the following 1470-residue polypeptide: ABC transporter G family member 48 (1470 aa).

Residues 1–47 (MAAAPSASGRRSMSWGSSISQSFRQAEADDPFGRAASQQGHDDDEEN) form a disordered region. Over residues 9–24 (GRRSMSWGSSISQSFR) the composition is skewed to polar residues. The ABC transporter 1 domain occupies 172 to 445 (GLIGRFGSSN…FENAGFRCPE (274 aa)). Position 205–212 (205–212 (GPPSSGKS)) interacts with ATP. The 214-residue stretch at 523–736 (ESLRAVMSRE…SQQAISINEF (214 aa)) folds into the ABC transmembrane type-2 1 domain. The next 6 helical transmembrane spans lie at 541-561 (FIYI…MTVF), 577-597 (FLGA…AELQ), 629-649 (VPVS…VMGF), 660-680 (FIAF…LGAI), 686-706 (VANT…GFLI), and 772-792 (FWIS…LYIL). Positions 828-852 (QIVHNNGASNTSATSSIPMSGSRST) are disordered. The segment covering 832-843 (NNGASNTSATSS) has biased composition (low complexity). The ABC transporter 2 domain occupies 869 to 1121 (LCFNHVNYYV…KLVEYFEAVP (253 aa)). 914-921 (GVSGAGKT) serves as a coordination point for ATP. The ABC transmembrane type-2 2 domain occupies 1194 to 1408 (SQCIANFWKQ…TIYGVVASQF (215 aa)). 7 consecutive transmembrane segments (helical) span residues 1215–1234 (AMRY…VFWQ), 1249–1271 (LGAT…QPVV), 1301–1321 (VIYN…MIGY), 1331–1351 (FMFF…MLVA), 1359–1379 (ANIL…FLVV), 1389–1409 (WYYW…SQFG), and 1439–1459 (FLGY…FIFG).

The protein belongs to the ABC transporter superfamily. ABCG family. PDR (TC 3.A.1.205) subfamily.

Its subcellular location is the membrane. Its function is as follows. May be a general defense protein. This is ABC transporter G family member 48 from Oryza sativa subsp. japonica (Rice).